The primary structure comprises 631 residues: RNA polymerase sigma factor RpoD (631 aa).

Residues Leu-395–Thr-465 form a sigma-70 factor domain-2 region. The Interaction with polymerase core subunit RpoC signature appears at Asp-419 to Gln-422. The interval Glu-474 to His-550 is sigma-70 factor domain-3. A sigma-70 factor domain-4 region spans residues Ile-563–Asn-616. Positions Leu-589–Ser-608 form a DNA-binding region, H-T-H motif.

It belongs to the sigma-70 factor family. RpoD/SigA subfamily. Interacts transiently with the RNA polymerase catalytic core.

It localises to the cytoplasm. In terms of biological role, sigma factors are initiation factors that promote the attachment of RNA polymerase to specific initiation sites and are then released. This sigma factor is the primary sigma factor during exponential growth. The sequence is that of RNA polymerase sigma factor RpoD from Borreliella burgdorferi (strain ATCC 35210 / DSM 4680 / CIP 102532 / B31) (Borrelia burgdorferi).